The following is a 1157-amino-acid chain: MTLQIIAGKAGTGKTTHLMDEVGEKIKKTSKTYIFIVPDQMTFQMETSFLNKQNLAGMLGTQIFSFSRLAWKILQETGGLSKTFLSQTGIEMVIRKAALDQKDKLKIFSRATSKKGFYSELAKLFKEMKQEEISVDELEKSAANLSTSVSSKVHDISLIYQKYEELLAGKFLENEDYLRLLADKIIESDYLNQTEIIIDGFTSFSKQELTVIEKLMQKCDKVTVSLTLNVPEIHKGLEDFSMFKASTEAYFALLEMAKLNKIQVEPEKILLENKRANSDSLAFLANAWGDNKYSSYEGGANDLTIHQANNRRAEMEGVAREIRQLALNGYRYRDIAILTRNIGDYDILCETVMESFDIPIFIDKKRAMAKHPFIEFIRSSIDAILFNWKYEPIFQAVKTEFFFDVAENATIMRRKADILENYVLENGIQNKWKWEKEGDWIYRKIRGLSTNVLPQTDEELATQSVINEMRNLIVEPLSTLENNITKAKTGIEFAMALYHYLEQVKAVEHLESWRQVAEENGYLELAREHEQAWSSISELLDEFVEVLGEEELDVNSFSEIITTGLDALEFSLLPPSLDQVVLADMENAKLLNMKVIFAIGMNDGVMPLRQKDKGILSDQDRDSLRVENSNLKPSAKNNIGEEDLLAYKIMSLPSDKLFLSYPAADEEGKVLSESNYLRKIKGQFKNLNESVYLTDPSLLNDKEQSSYIRSKQATLGLLTSQLQMYKRGYPLSNVWWDAYNSYFEDSKESEAAKQVLSSLYYENKTKPLQETTAKNLFGENIHASVSRMEKFFSCEFQHFAQYGLKLEERAHYKLQAVDMGEIFHGAMEWISAELKRTNRDWGNLTEEECRQMAKLAMTFLAPKIQHEILLSSKRMEYIQYKLLQIITRATTVLNEQAKSSAFRPIGLEVDFGLKGDIPPLKIPLQSDSELLLQGRIDRIDAAEQDDRTFLRIIDYKSSSHDLALTEVYYGLALQMLTYLDIVVTNAQKMIGKTAEPAGVLYFHMHNQYVQAEKELSDEAIARELQKSSKMKGLILSDPVAVSLMDTNLEKGKSSNIIPAEIKQNGELSARSRTATKAEFDKMRRFVRQKYQEAGNKILDGAVSINPYKLKEKTPCQFCGFRSFCGFDPSLASNQYRHLTNEKTETILTKMDIEGGTQ.

The UvrD-like helicase ATP-binding domain maps to 1–277 (MTLQIIAGKA…KILLENKRAN (277 aa)). 8-15 (GKAGTGKT) is an ATP binding site. Residues 271-590 (LENKRANSDS…VLADMENAKL (320 aa)) form the UvrD-like helicase C-terminal domain. Cys-794, Cys-1115, Cys-1118, and Cys-1124 together coordinate [4Fe-4S] cluster.

This sequence belongs to the helicase family. AddB/RexB type 1 subfamily. Heterodimer of AddA and AddB. Mg(2+) serves as cofactor. Requires [4Fe-4S] cluster as cofactor.

The heterodimer acts as both an ATP-dependent DNA helicase and an ATP-dependent, dual-direction single-stranded exonuclease. Recognizes the chi site generating a DNA molecule suitable for the initiation of homologous recombination. The AddB subunit has 5' -&gt; 3' nuclease activity but not helicase activity. This is ATP-dependent helicase/deoxyribonuclease subunit B from Listeria innocua serovar 6a (strain ATCC BAA-680 / CLIP 11262).